A 357-amino-acid chain; its full sequence is 3-dehydroquinate synthase (357 aa).

NAD(+) is bound by residues 104-108, 128-129, Lys141, and 168-171; these read GVVGD, TT, and FLET. Zn(2+) is bound by residues Glu183, His243, and His260.

It belongs to the sugar phosphate cyclases superfamily. Dehydroquinate synthase family. It depends on NAD(+) as a cofactor. Co(2+) serves as cofactor. Zn(2+) is required as a cofactor.

The protein resides in the cytoplasm. The catalysed reaction is 7-phospho-2-dehydro-3-deoxy-D-arabino-heptonate = 3-dehydroquinate + phosphate. It functions in the pathway metabolic intermediate biosynthesis; chorismate biosynthesis; chorismate from D-erythrose 4-phosphate and phosphoenolpyruvate: step 2/7. Functionally, catalyzes the conversion of 3-deoxy-D-arabino-heptulosonate 7-phosphate (DAHP) to dehydroquinate (DHQ). The chain is 3-dehydroquinate synthase from Streptococcus pyogenes serotype M18 (strain MGAS8232).